Consider the following 149-residue polypeptide: D-aminoacyl-tRNA deacylase (149 aa).

The short motif at 137-138 (GP) is the Gly-cisPro motif, important for rejection of L-amino acids element.

Belongs to the DTD family. In terms of assembly, homodimer.

It localises to the cytoplasm. It carries out the reaction glycyl-tRNA(Ala) + H2O = tRNA(Ala) + glycine + H(+). The enzyme catalyses a D-aminoacyl-tRNA + H2O = a tRNA + a D-alpha-amino acid + H(+). Its function is as follows. An aminoacyl-tRNA editing enzyme that deacylates mischarged D-aminoacyl-tRNAs. Also deacylates mischarged glycyl-tRNA(Ala), protecting cells against glycine mischarging by AlaRS. Acts via tRNA-based rather than protein-based catalysis; rejects L-amino acids rather than detecting D-amino acids in the active site. By recycling D-aminoacyl-tRNA to D-amino acids and free tRNA molecules, this enzyme counteracts the toxicity associated with the formation of D-aminoacyl-tRNA entities in vivo and helps enforce protein L-homochirality. The protein is D-aminoacyl-tRNA deacylase of Geobacter sp. (strain M21).